A 59-amino-acid chain; its full sequence is Potassium channel toxin alpha-KTx 4.1 (59 aa).

Residues 1–22 form the signal peptide; sequence MKAFYGILIIFILISMIDLSKQ. 3 disulfides stabilise this stretch: C29-C50, C35-C55, and C39-C57. Residues 48–55 are interaction with Ca(2+)-activated K(+) channels; that stretch reads GKCMNGKC.

The protein belongs to the short scorpion toxin superfamily. Potassium channel inhibitor family. Alpha-KTx 04 subfamily. Expressed by the venom gland.

The protein resides in the secreted. Functionally, potently blocks Kv1.1/KCNA1 (85%), Kv1.2/KCNA2 (91%), Kv1.3/KCNA3 (89%), Kv1.6/KCNA6 (94%), and Shaker (97%). The protein is Potassium channel toxin alpha-KTx 4.1 of Tityus serrulatus (Brazilian scorpion).